A 356-amino-acid polypeptide reads, in one-letter code: Uroporphyrinogen decarboxylase (356 aa).

Substrate contacts are provided by residues 25–29, D75, Y152, T207, and H326; that span reads RQAGR.

The protein belongs to the uroporphyrinogen decarboxylase family. As to quaternary structure, homodimer.

Its subcellular location is the cytoplasm. The catalysed reaction is uroporphyrinogen III + 4 H(+) = coproporphyrinogen III + 4 CO2. Its pathway is porphyrin-containing compound metabolism; protoporphyrin-IX biosynthesis; coproporphyrinogen-III from 5-aminolevulinate: step 4/4. Its function is as follows. Catalyzes the decarboxylation of four acetate groups of uroporphyrinogen-III to yield coproporphyrinogen-III. This Magnetococcus marinus (strain ATCC BAA-1437 / JCM 17883 / MC-1) protein is Uroporphyrinogen decarboxylase.